The sequence spans 113 residues: ATP-dependent Clp protease adapter protein ClpS (113 aa).

Residues 1 to 11 are compositionally biased toward basic and acidic residues; the sequence is MHRDLHMMSDR. Residues 1–25 form a disordered region; sequence MHRDLHMMSDRSEDDGDTSILTATK.

It belongs to the ClpS family. Binds to the N-terminal domain of the chaperone ClpA.

Involved in the modulation of the specificity of the ClpAP-mediated ATP-dependent protein degradation. This chain is ATP-dependent Clp protease adapter protein ClpS, found in Roseobacter denitrificans (strain ATCC 33942 / OCh 114) (Erythrobacter sp. (strain OCh 114)).